A 136-amino-acid polypeptide reads, in one-letter code: Glutamate-rich protein 4 (136 aa).

Residues 92 to 136 (EEEEEEEQEEKSCVEENKGPEEKQDEERSRSSYPAQRLPDFGMTI) are disordered. Residues 101–121 (EKSCVEENKGPEEKQDEERSR) are compositionally biased toward basic and acidic residues.

The polypeptide is Glutamate-rich protein 4 (Erich4) (Mus musculus (Mouse)).